The primary structure comprises 354 residues: DNA polymerase IV (354 aa).

Residues 6–187 form the UmuC domain; it reads IIHVDCDCFY…LPVARLHGVG (182 aa). Residues D10 and D105 each contribute to the Mg(2+) site. Residue E106 is part of the active site.

Belongs to the DNA polymerase type-Y family. As to quaternary structure, monomer. Requires Mg(2+) as cofactor.

Its subcellular location is the cytoplasm. It catalyses the reaction DNA(n) + a 2'-deoxyribonucleoside 5'-triphosphate = DNA(n+1) + diphosphate. Functionally, poorly processive, error-prone DNA polymerase involved in untargeted mutagenesis. Copies undamaged DNA at stalled replication forks, which arise in vivo from mismatched or misaligned primer ends. These misaligned primers can be extended by PolIV. Exhibits no 3'-5' exonuclease (proofreading) activity. May be involved in translesional synthesis, in conjunction with the beta clamp from PolIII. The chain is DNA polymerase IV from Pseudomonas putida (strain ATCC 700007 / DSM 6899 / JCM 31910 / BCRC 17059 / LMG 24140 / F1).